The sequence spans 433 residues: 3-phosphoshikimate 1-carboxyvinyltransferase (433 aa).

3-phosphoshikimate-binding residues include Lys21, Ser22, and Arg26. Residue Lys21 coordinates phosphoenolpyruvate. Positions 92 and 120 each coordinate phosphoenolpyruvate. Residues Ser166, Gln168, Asp317, and Lys344 each coordinate 3-phosphoshikimate. Gln168 provides a ligand contact to phosphoenolpyruvate. The active-site Proton acceptor is Asp317. Arg348 and Arg391 together coordinate phosphoenolpyruvate.

The protein belongs to the EPSP synthase family. Monomer.

Its subcellular location is the cytoplasm. The enzyme catalyses 3-phosphoshikimate + phosphoenolpyruvate = 5-O-(1-carboxyvinyl)-3-phosphoshikimate + phosphate. Its pathway is metabolic intermediate biosynthesis; chorismate biosynthesis; chorismate from D-erythrose 4-phosphate and phosphoenolpyruvate: step 6/7. Its function is as follows. Catalyzes the transfer of the enolpyruvyl moiety of phosphoenolpyruvate (PEP) to the 5-hydroxyl of shikimate-3-phosphate (S3P) to produce enolpyruvyl shikimate-3-phosphate and inorganic phosphate. This chain is 3-phosphoshikimate 1-carboxyvinyltransferase, found in Caldicellulosiruptor bescii (strain ATCC BAA-1888 / DSM 6725 / KCTC 15123 / Z-1320) (Anaerocellum thermophilum).